A 725-amino-acid chain; its full sequence is N-alpha-acetyltransferase 35, NatC auxiliary subunit (725 aa).

A Phosphoserine modification is found at serine 187. The tract at residues 548–573 (ERIMEEQQKGRSSKKTKKKKKVRPLS) is disordered. Residues 558-571 (RSSKKTKKKKKVRP) show a composition bias toward basic residues.

Belongs to the MAK10 family. Component of the N-terminal acetyltransferase C (NatC) complex, which is composed of NAA35, NAA38 and NAA30.

The protein resides in the cytoplasm. Auxillary component of the N-terminal acetyltransferase C (NatC) complex which catalyzes acetylation of N-terminal methionine residues. N-terminal acetylation protects proteins from ubiquitination and degradation by the N-end rule pathway. Involved in regulation of apoptosis and proliferation of smooth muscle cells. This chain is N-alpha-acetyltransferase 35, NatC auxiliary subunit (NAA35), found in Macaca fascicularis (Crab-eating macaque).